Here is a 254-residue protein sequence, read N- to C-terminus: MTRMKVNQMSLLEHIAELRKRLLIVALAFVVFFIAGFFLAKPIIVYLQETDEAKQLTLNAFNLTDPLYVFMQFAFIIGIVLTSPVILYQLWAFVSPGLYEKERKVTLSYIPVSILLFLAGLSFSYYILFPFVVDFMKRISQDLNVNQVIGINEYFHFLLQLTIPFGLLFQMPVILMFLTRLGIVTPMFLAKIRKYAYFTLLVIAALITPPELLSHMMVTVPLLILYEISILISKAAYRKAQKSSAADRDVSSGQ.

The next 6 helical transmembrane spans lie at 24 to 44 (IVAL…KPII), 67 to 87 (LYVF…PVIL), 112 to 132 (VSIL…FPFV), 157 to 177 (FLLQ…ILMF), 187 to 207 (MFLA…AALI), and 212 to 232 (LLSH…SILI).

It belongs to the TatC family. As to quaternary structure, forms a complex with TatAy. Two types of complexes exist: one composed of TatAy and TatCy, and another composed only of TatAy.

The protein localises to the cell membrane. Its function is as follows. Part of the twin-arginine translocation (Tat) system that transports large folded proteins containing a characteristic twin-arginine motif in their signal peptide across membranes. Required for YwbN secretion. The sequence is that of Sec-independent protein translocase protein TatCy from Bacillus subtilis (strain 168).